The primary structure comprises 411 residues: cAMP-dependent protein kinase regulatory subunit (411 aa).

The interval 1 to 144 is disordered; it reads MAESAFPSAQ…SWTPPYHEKT (144 aa). The dimerization and phosphorylation stretch occupies residues 23 to 159; sequence AAFQKISEED…RLKTAVSSNF (137 aa). The segment covering 46-58 has biased composition (low complexity); that stretch reads SANAAAASSSTGS. A compositionally biased stretch (acidic residues) spans 85–96; it reads EEDEEGADEFPP. The segment covering 119 to 136 has biased composition (polar residues); that stretch reads TSVSAESLNPTSAGSDSW. Residue S120 is modified to Phosphoserine. 3',5'-cyclic AMP-binding positions include 160 to 289, E238, R247, 292 to 411, E359, and R368; these read LFSH…FLEE and LLSS…PVPA.

Belongs to the cAMP-dependent kinase regulatory chain family. In terms of assembly, tetramer, composed of 2 regulatory (R) and 2 catalytic (C) subunits. In the presence of cAMP it dissociates into 2 active monomeric C subunits and an R dimer.

In Aspergillus niger, this protein is cAMP-dependent protein kinase regulatory subunit (pkaR).